A 187-amino-acid polypeptide reads, in one-letter code: uncharacterized protein (187 aa).

Over residues 139–168 (ESKDRKALKNAARKAEKNAHEESSYFRVDD) the composition is skewed to basic and acidic residues. Residues 139-172 (ESKDRKALKNAARKAEKNAHEESSYFRVDDPEPE) form a disordered region.

This is an uncharacterized protein from Caenorhabditis elegans.